We begin with the raw amino-acid sequence, 163 residues long: ATP synthase subunit b, sodium ion specific (163 aa).

The helical transmembrane segment at 9–29 threads the bilayer; the sequence is VSIDINMFWQIINFLILMFFF.

Belongs to the ATPase B chain family. F-type ATPases have 2 components, F(1) - the catalytic core - and F(0) - the membrane proton channel. F(1) has five subunits: alpha(3), beta(3), gamma(1), delta(1), epsilon(1). F(0) has three main subunits: a(1), b(2) and c(10-14). The alpha and beta chains form an alternating ring which encloses part of the gamma chain. F(1) is attached to F(0) by a central stalk formed by the gamma and epsilon chains, while a peripheral stalk is formed by the delta and b chains.

Its subcellular location is the cell inner membrane. Functionally, f(1)F(0) ATP synthase produces ATP from ADP in the presence of a proton or sodium gradient. F-type ATPases consist of two structural domains, F(1) containing the extramembraneous catalytic core and F(0) containing the membrane proton channel, linked together by a central stalk and a peripheral stalk. During catalysis, ATP synthesis in the catalytic domain of F(1) is coupled via a rotary mechanism of the central stalk subunits to proton translocation. In terms of biological role, component of the F(0) channel, it forms part of the peripheral stalk, linking F(1) to F(0). The polypeptide is ATP synthase subunit b, sodium ion specific (atpF) (Ilyobacter tartaricus).